We begin with the raw amino-acid sequence, 404 residues long: Agnestins biosynthesis cluster transcription factor AgnL10 (404 aa).

The segment at residues 23 to 50 is a DNA-binding region (zn(2)-C6 fungal-type); it reads CNRCAVSKIKCSKEKPACARCAKQDKVC. 3 disordered regions span residues 54 to 83, 188 to 209, and 294 to 318; these read ATKRAGRKRGSRRHNNPVPSPTTQDLPTAA, ASASSMDPAAGPQRPPDEPSSG, and PGPDGDGVSWDNSTPPPGEQGAGVD. Residues 57–68 show a composition bias toward basic residues; that stretch reads RAGRKRGSRRHN. Polar residues predominate over residues 74 to 83; the sequence is PTTQDLPTAA. A compositionally biased stretch (low complexity) spans 188 to 197; the sequence is ASASSMDPAA.

Its subcellular location is the nucleus. Transcription factor that regulates the expression of the gene cluster that mediates the biosynthesis of agnestins, dihydroxy-xanthone metabolites. The protein is Agnestins biosynthesis cluster transcription factor AgnL10 of Paecilomyces divaricatus (Penicillium divaricatum).